The chain runs to 275 residues: NH(3)-dependent NAD(+) synthetase (275 aa).

Position 47–54 (47–54) interacts with ATP; that stretch reads GISGGQDS. Position 53 (D53) interacts with Mg(2+). A deamido-NAD(+)-binding site is contributed by R141. Residue T161 coordinates ATP. E166 is a Mg(2+) binding site. 2 residues coordinate deamido-NAD(+): K174 and D181. The ATP site is built by K190 and T212. Residue 261–262 coordinates deamido-NAD(+); the sequence is HK.

The protein belongs to the NAD synthetase family. Homodimer.

The enzyme catalyses deamido-NAD(+) + NH4(+) + ATP = AMP + diphosphate + NAD(+) + H(+). Its pathway is cofactor biosynthesis; NAD(+) biosynthesis; NAD(+) from deamido-NAD(+) (ammonia route): step 1/1. In terms of biological role, catalyzes the ATP-dependent amidation of deamido-NAD to form NAD. Uses ammonia as a nitrogen source. The polypeptide is NH(3)-dependent NAD(+) synthetase (Lactiplantibacillus plantarum (strain ATCC BAA-793 / NCIMB 8826 / WCFS1) (Lactobacillus plantarum)).